A 384-amino-acid polypeptide reads, in one-letter code: uncharacterized protein (384 aa).

This is an uncharacterized protein from Nostoc sp. (strain PCC 7120 / SAG 25.82 / UTEX 2576).